Here is a 250-residue protein sequence, read N- to C-terminus: Small ribosomal subunit protein uS3 (250 aa).

One can recognise a KH type-2 domain in the interval 39–111; sequence IRTLIKNHYP…KVQINIFEVK (73 aa).

The protein belongs to the universal ribosomal protein uS3 family. In terms of assembly, part of the 30S ribosomal subunit. Forms a tight complex with proteins S10 and S14.

In terms of biological role, binds the lower part of the 30S subunit head. Binds mRNA in the 70S ribosome, positioning it for translation. This chain is Small ribosomal subunit protein uS3, found in Phytoplasma vitis (Flavescence doree phytoplasma).